A 103-amino-acid polypeptide reads, in one-letter code: Nucleoid-associated protein Anae109_3761 (103 aa).

This sequence belongs to the YbaB/EbfC family. As to quaternary structure, homodimer.

The protein localises to the cytoplasm. Its subcellular location is the nucleoid. Its function is as follows. Binds to DNA and alters its conformation. May be involved in regulation of gene expression, nucleoid organization and DNA protection. The chain is Nucleoid-associated protein Anae109_3761 from Anaeromyxobacter sp. (strain Fw109-5).